Here is a 76-residue protein sequence, read N- to C-terminus: Dolichyl-diphosphooligosaccharide--protein glycosyltransferase subunit OST5 (76 aa).

2 helical membrane passes run 14 to 34 (FYPVCAFLFCVIGFAFFATFI) and 54 to 74 (ALIASMSLGLGLFFVLLAGGI).

It belongs to the OST5 family. In terms of assembly, component of the oligosaccharyltransferase (OST) complex.

The protein localises to the membrane. Functionally, subunit of the oligosaccharyl transferase (OST) complex that catalyzes the initial transfer of a defined glycan (Glc(3)Man(9)GlcNAc(2) in eukaryotes) from the lipid carrier dolichol-pyrophosphate to an asparagine residue within an Asn-X-Ser/Thr consensus motif in nascent polypeptide chains, the first step in protein N-glycosylation. N-glycosylation occurs cotranslationally and the complex associates with the Sec61 complex at the channel-forming translocon complex that mediates protein translocation across the endoplasmic reticulum (ER). All subunits are required for a maximal enzyme activity. The chain is Dolichyl-diphosphooligosaccharide--protein glycosyltransferase subunit OST5 from Dictyostelium discoideum (Social amoeba).